The chain runs to 221 residues: Leucine rich adaptor protein 1-like (221 aa).

M1 bears the N-acetylmethionine mark. The tract at residues 24–81 is disordered; it reads LARSLRGEELAPREGAADPSGVGGSCSSSSSCSSFAPSVSSSSSSSPASGSPRRSHPS. Basic and acidic residues predominate over residues 28–39; sequence LRGEELAPREGA. Positions 48–75 are enriched in low complexity; the sequence is SCSSSSSCSSFAPSVSSSSSSSPASGSP.

This Mus musculus (Mouse) protein is Leucine rich adaptor protein 1-like (Lurap1l).